A 383-amino-acid polypeptide reads, in one-letter code: MDQTLSRRLFLWHNPQTDNQCRNERHMIHTSKIYREINRIGVQIKGLPDYWMGQARRISYDRVGSAGNTITEGRKPVSADMAILLIYQPRGLLESLFLQLEHLLSKGLGVVIVSNRKVLEHDRNRLSEYCHLIIERKNIGYDFGGYRDGILALHKRSIHPKSLFVMNDSVWFPIRKDCDLIDRCRESRSDIVGVFYNNKSKFPKNHHLQSYFYRFGEKVVSDSRFLAYWRKIPMYNDKRNVIRNLEIKLTKNFQLMGFGISSLYAPEDILKAFKNIEVRNIRPVLDYYISALGYDQNTFWSAYKNESPKGGDTHALPIDVPNSRVFFHFLDAHPEILIRKLNSPIIKKNRDKRFVAQRKAIIEGGFLKEIDAVIQKELINWDR.

To V.anguillarum virulence protein VirA.

Functionally, could have an enzymatic function. This is an uncharacterized protein from Sinorhizobium fredii (strain NBRC 101917 / NGR234).